A 355-amino-acid polypeptide reads, in one-letter code: Guanine nucleotide-binding protein G(z) subunit alpha (355 aa).

Residues 1-14 are compositionally biased toward basic and acidic residues; the sequence is MGCRQSSEEKEAAR. The interval 1 to 26 is disordered; it reads MGCRQSSEEKEAARRSRRIDRHLRSE. The N-myristoyl glycine moiety is linked to residue G2. C3 carries S-palmitoyl cysteine lipidation. One can recognise a G-alpha domain in the interval 32–355; that stretch reads REIKLLLLGT…QNNLKYIGLC (324 aa). Residues 35 to 48 form a G1 motif region; the sequence is KLLLLGTSNSGKST. GTP is bound by residues 40–47, 176–182, 201–205, 270–273, and A327; these read GTSNSGKS, LRSRDMT, DVGGQ, and NKKD. Mg(2+) is bound by residues S47 and T182. Positions 174 to 182 are G2 motif; the sequence is DILRSRDMT. Residues 197–206 form a G3 motif region; it reads FKMVDVGGQR. The tract at residues 266–273 is G4 motif; sequence ILFLNKKD. Positions 325–330 are G5 motif; it reads TCATDT.

Belongs to the G-alpha family. G(i/o/t/z) subfamily. G-proteins are composed of 3 units; alpha, beta and gamma. The alpha chain contains the guanine nucleotide binding site. Interacts with ADGRB2.

The protein resides in the membrane. Its function is as follows. Guanine nucleotide-binding proteins (G proteins) are involved as modulators or transducers in various transmembrane signaling systems. This Mus musculus (Mouse) protein is Guanine nucleotide-binding protein G(z) subunit alpha (Gnaz).